The following is a 316-amino-acid chain: 4-hydroxy-3-methylbut-2-enyl diphosphate reductase (316 aa).

Residue cysteine 12 participates in [4Fe-4S] cluster binding. (2E)-4-hydroxy-3-methylbut-2-enyl diphosphate is bound by residues histidine 41 and histidine 74. Dimethylallyl diphosphate is bound by residues histidine 41 and histidine 74. Isopentenyl diphosphate is bound by residues histidine 41 and histidine 74. Cysteine 96 contributes to the [4Fe-4S] cluster binding site. Histidine 124 provides a ligand contact to (2E)-4-hydroxy-3-methylbut-2-enyl diphosphate. A dimethylallyl diphosphate-binding site is contributed by histidine 124. Residue histidine 124 coordinates isopentenyl diphosphate. The Proton donor role is filled by glutamate 126. Threonine 165 contributes to the (2E)-4-hydroxy-3-methylbut-2-enyl diphosphate binding site. Residue cysteine 195 participates in [4Fe-4S] cluster binding. Residues serine 223, serine 224, asparagine 225, and serine 267 each coordinate (2E)-4-hydroxy-3-methylbut-2-enyl diphosphate. Dimethylallyl diphosphate is bound by residues serine 223, serine 224, asparagine 225, and serine 267. Residues serine 223, serine 224, asparagine 225, and serine 267 each contribute to the isopentenyl diphosphate site.

The protein belongs to the IspH family. [4Fe-4S] cluster serves as cofactor.

It carries out the reaction isopentenyl diphosphate + 2 oxidized [2Fe-2S]-[ferredoxin] + H2O = (2E)-4-hydroxy-3-methylbut-2-enyl diphosphate + 2 reduced [2Fe-2S]-[ferredoxin] + 2 H(+). The enzyme catalyses dimethylallyl diphosphate + 2 oxidized [2Fe-2S]-[ferredoxin] + H2O = (2E)-4-hydroxy-3-methylbut-2-enyl diphosphate + 2 reduced [2Fe-2S]-[ferredoxin] + 2 H(+). It functions in the pathway isoprenoid biosynthesis; dimethylallyl diphosphate biosynthesis; dimethylallyl diphosphate from (2E)-4-hydroxy-3-methylbutenyl diphosphate: step 1/1. Its pathway is isoprenoid biosynthesis; isopentenyl diphosphate biosynthesis via DXP pathway; isopentenyl diphosphate from 1-deoxy-D-xylulose 5-phosphate: step 6/6. Catalyzes the conversion of 1-hydroxy-2-methyl-2-(E)-butenyl 4-diphosphate (HMBPP) into a mixture of isopentenyl diphosphate (IPP) and dimethylallyl diphosphate (DMAPP). Acts in the terminal step of the DOXP/MEP pathway for isoprenoid precursor biosynthesis. The protein is 4-hydroxy-3-methylbut-2-enyl diphosphate reductase of Acidithiobacillus ferrooxidans (strain ATCC 53993 / BNL-5-31) (Leptospirillum ferrooxidans (ATCC 53993)).